We begin with the raw amino-acid sequence, 469 residues long: L-seryl-tRNA(Sec) selenium transferase (469 aa).

Lys298 carries the N6-(pyridoxal phosphate)lysine modification.

It belongs to the SelA family. Requires pyridoxal 5'-phosphate as cofactor.

It is found in the cytoplasm. It catalyses the reaction L-seryl-tRNA(Sec) + selenophosphate + H(+) = L-selenocysteinyl-tRNA(Sec) + phosphate. Its pathway is aminoacyl-tRNA biosynthesis; selenocysteinyl-tRNA(Sec) biosynthesis; selenocysteinyl-tRNA(Sec) from L-seryl-tRNA(Sec) (bacterial route): step 1/1. Converts seryl-tRNA(Sec) to selenocysteinyl-tRNA(Sec) required for selenoprotein biosynthesis. This chain is L-seryl-tRNA(Sec) selenium transferase, found in Nitratidesulfovibrio vulgaris (strain ATCC 29579 / DSM 644 / CCUG 34227 / NCIMB 8303 / VKM B-1760 / Hildenborough) (Desulfovibrio vulgaris).